The primary structure comprises 307 residues: Auxiliary protein GraX (307 aa).

Homodimer. Interacts with GraR and GraS.

In terms of biological role, plays a role in resistance against cationic antimicrobial peptides (CAMPs). Facilitates the activation of GraS to transduce the signal to GraR. The protein is Auxiliary protein GraX (graX) of Staphylococcus aureus (strain NCTC 8325 / PS 47).